Here is an 840-residue protein sequence, read N- to C-terminus: Translation initiation factor IF-2 (840 aa).

Disordered regions lie at residues 94–157 (KRSP…AGAE) and 169–256 (PVAK…PTGP). Over residues 95–143 (RSPDEIEAERQRELEEQRAAEEAERLKAEEAAARQRAEEEARKAEEAAR) the composition is skewed to basic and acidic residues. Low complexity predominate over residues 144–157 (AKAAQEAAATAGAE). 2 stretches are compositionally biased toward basic and acidic residues: residues 175 to 191 (AVEE…PKRD) and 223 to 232 (STDEESDGYR). The span at 233-247 (RGGRGGKSKLKKRNQ) shows a compositional bias: basic residues. The region spanning 340–509 (TRAPVVTVMG…LLQAEVLELK (170 aa)) is the tr-type G domain. The segment at 349 to 356 (GHVDHGKT) is G1. 349 to 356 (GHVDHGKT) contributes to the GTP binding site. Residues 374 to 378 (GITQH) are G2. The interval 395 to 398 (DTPG) is G3. Residues 395-399 (DTPGH) and 449-452 (NKID) contribute to the GTP site. Residues 449-452 (NKID) are G4. Positions 485 to 487 (SAK) are G5.

The protein belongs to the TRAFAC class translation factor GTPase superfamily. Classic translation factor GTPase family. IF-2 subfamily.

Its subcellular location is the cytoplasm. Functionally, one of the essential components for the initiation of protein synthesis. Protects formylmethionyl-tRNA from spontaneous hydrolysis and promotes its binding to the 30S ribosomal subunits. Also involved in the hydrolysis of GTP during the formation of the 70S ribosomal complex. The polypeptide is Translation initiation factor IF-2 (Pseudomonas aeruginosa (strain UCBPP-PA14)).